A 43-amino-acid chain; its full sequence is uncharacterized protein (43 aa).

The N-terminal stretch at 1–16 (MKLLNFILIIFNALKS) is a signal peptide. Asn37 is a glycosylation site (N-linked (GlcNAc...) asparagine; by host).

This is an uncharacterized protein from Acheta domesticus (House cricket).